Reading from the N-terminus, the 55-residue chain is Ferredoxin (55 aa).

2 4Fe-4S ferredoxin-type domains span residues 2-27 (YFIT…SPGD) and 28-55 (SVYV…PQQK). [4Fe-4S] cluster contacts are provided by C8, C11, C14, C18, C37, C40, C43, and C47.

Requires [4Fe-4S] cluster as cofactor.

Its function is as follows. Ferredoxins are iron-sulfur proteins that transfer electrons in a wide variety of metabolic reactions. This Acetivibrio thermocellus (Hungateiclostridium thermocellum) protein is Ferredoxin.